A 624-amino-acid chain; its full sequence is Altered inheritance of mitochondria protein 9, mitochondrial (624 aa).

The transit peptide at 1-34 directs the protein to the mitochondrion; that stretch reads MLSRVARCSRTLNQVTRNGQSGLFSAVLRTSIRQ.

It belongs to the AIM9 family.

The protein resides in the mitochondrion. This Candida albicans (strain WO-1) (Yeast) protein is Altered inheritance of mitochondria protein 9, mitochondrial (AIM9).